A 476-amino-acid chain; its full sequence is MAALTCITCRVAFRDAELQRAHYKTDWHRYNLRRKVAAMAPVTAEGFQERVRAQRAVAEAAEASKGAATYCTACGKKFATFNAYENHLGSRRHAELERKAVRAASRRVELLNAKNLEKGLGADGVDKDAVNAAIQQAIKAQPSTSPKKAPFVPTDECGRAAAGARGVPERDPTEKPPRLQWFEQQAKKLAKQQWEDGEEEGEEEEEDDEDEDWEDIDSDDGLECEDPGVEDQDAEDAAAEESPPLGAIPITDCLFCSHHSSSLVKNVAHMTKVHSFFIPDIEYLSDLKGLIKYLGEKVGVGKICLWCNEKGKSFYSTEAVQAHMNDKSHCKLFTDGDAALEFADFYDFRSSYPDYKEGQDPAELEALSTDKILECDDETMELILPSGARVGHRSLMRYYKQRFGLPRAVTVARNQKAVGRVLQQYRALGWMGSTGAALMRERDMQYVQRMKSKWMLKIGMKNNATKQMHFRAQVRF.

Ala2 carries the N-acetylalanine modification. 2 U1-type zinc fingers span residues 4 to 28 (LTCITCRVAFRDAELQRAHYKTDWH) and 69 to 93 (TYCTACGKKFATFNAYENHLGSRRH). The interval 137–243 (AIKAQPSTSP…AEDAAAEESP (107 aa)) is disordered. The segment covering 167–177 (VPERDPTEKPP) has biased composition (basic and acidic residues). Positions 195–239 (EDGEEEGEEEEEDDEDEDWEDIDSDDGLECEDPGVEDQDAEDAAA) are enriched in acidic residues. A Phosphoserine modification is found at Ser275.

Belongs to the REI1 family. Homo- and heterodimer. Associates with pre-60S ribosomal particles. Interacts with MELK and MYBL2. Interacts with DNAJC21. In terms of processing, phosphorylated by MELK. The phosphorylation may redirect the protein to the nucleus. Post-translationally, ubiquitinated by HECTD1, leading to its degradation.

The protein resides in the cytoplasm. Its subcellular location is the nucleus. Pre-60S-associated cytoplasmic factor involved in the cytoplasmic maturation of the 60S subunit. In Mus musculus (Mouse), this protein is Cytoplasmic 60S subunit biogenesis factor ZNF622 (Znf622).